Reading from the N-terminus, the 1181-residue chain is Cellulose synthase-like protein D5 (1181 aa).

Over residues 1–17 (MVKSAASQSPSPVTITV) the composition is skewed to polar residues. Disordered stretches follow at residues 1–70 (MVKS…DEGR) and 202–229 (KEPY…LPQM). Over residues 48–59 (SSRATRRTSISS) the composition is skewed to low complexity. Acidic residues predominate over residues 210–222 (DDPETEEEDEEDE). A run of 2 helical transmembrane segments spans residues 312-332 (AIIS…GLFL) and 343-363 (AMWL…SWLL). Asp443 is a catalytic residue. The stretch at 497–542 (VRERRRVKREYDEFKVRINSLPEAIRRRSDAYNVHEELRAKKKQME) forms a coiled coil. The active site involves Asp884. The next 6 membrane-spanning stretches (helical) occupy residues 966–986 (LFLI…QFIV), 991–1011 (ITFL…SLLE), 1038–1058 (PAAV…SFTL), 1082–1102 (FLMV…AVGL), 1116–1136 (LVGG…FAKG), and 1146–1166 (TIVF…WVYI).

Belongs to the glycosyltransferase 2 family. Plant cellulose synthase-like D subfamily. As to expression, expressed in vascular tissues.

The protein resides in the golgi apparatus membrane. Functionally, involved in stem and root growth. Possesses xylan and homogalacturonan synthase activity. In Arabidopsis thaliana (Mouse-ear cress), this protein is Cellulose synthase-like protein D5 (CSLD5).